We begin with the raw amino-acid sequence, 619 residues long: 1-deoxy-D-xylulose-5-phosphate synthase (619 aa).

Thiamine diphosphate-binding positions include H80 and 121 to 123 (GHS). D152 provides a ligand contact to Mg(2+). Thiamine diphosphate-binding positions include 153–154 (GA), N181, Y288, and E370. A Mg(2+)-binding site is contributed by N181.

Belongs to the transketolase family. DXPS subfamily. Homodimer. Mg(2+) serves as cofactor. The cofactor is thiamine diphosphate.

It carries out the reaction D-glyceraldehyde 3-phosphate + pyruvate + H(+) = 1-deoxy-D-xylulose 5-phosphate + CO2. It participates in metabolic intermediate biosynthesis; 1-deoxy-D-xylulose 5-phosphate biosynthesis; 1-deoxy-D-xylulose 5-phosphate from D-glyceraldehyde 3-phosphate and pyruvate: step 1/1. Functionally, catalyzes the acyloin condensation reaction between C atoms 2 and 3 of pyruvate and glyceraldehyde 3-phosphate to yield 1-deoxy-D-xylulose-5-phosphate (DXP). The chain is 1-deoxy-D-xylulose-5-phosphate synthase from Yersinia pseudotuberculosis serotype I (strain IP32953).